We begin with the raw amino-acid sequence, 192 residues long: UPF0149 protein KPN78578_32810 (192 aa).

This sequence belongs to the UPF0149 family.

This chain is UPF0149 protein KPN78578_32810, found in Klebsiella pneumoniae subsp. pneumoniae (strain ATCC 700721 / MGH 78578).